A 329-amino-acid polypeptide reads, in one-letter code: NTD biosynthesis operon regulator NtdR (329 aa).

Residues 2–56 enclose the HTH lacI-type domain; it reads PTIDEIAKLCNVSKTTVSRVLNNHPYVSKEKRDMILKAINELDYTPNYLARNFRR. Residues 4-23 constitute a DNA-binding region (H-T-H motif); it reads IDEIAKLCNVSKTTVSRVLN.

Its function is as follows. Positively regulates the ntdABC operon and negatively regulates its own transcription. Binds to NTD to induce ntdABC transcription. The sequence is that of NTD biosynthesis operon regulator NtdR (ntdR) from Bacillus subtilis (strain 168).